The chain runs to 382 residues: 3-dehydroquinate synthase (382 aa).

NAD(+) is bound by residues 81-86 (EGEISK), 115-119 (GVVGD), 139-140 (TS), K152, and K161. Zn(2+) contacts are provided by E194, H256, and H274.

This sequence belongs to the sugar phosphate cyclases superfamily. Dehydroquinate synthase family. NAD(+) is required as a cofactor. It depends on Co(2+) as a cofactor. Requires Zn(2+) as cofactor.

The protein localises to the cytoplasm. It catalyses the reaction 7-phospho-2-dehydro-3-deoxy-D-arabino-heptonate = 3-dehydroquinate + phosphate. The protein operates within metabolic intermediate biosynthesis; chorismate biosynthesis; chorismate from D-erythrose 4-phosphate and phosphoenolpyruvate: step 2/7. Catalyzes the conversion of 3-deoxy-D-arabino-heptulosonate 7-phosphate (DAHP) to dehydroquinate (DHQ). In Bradyrhizobium diazoefficiens (strain JCM 10833 / BCRC 13528 / IAM 13628 / NBRC 14792 / USDA 110), this protein is 3-dehydroquinate synthase.